A 445-amino-acid chain; its full sequence is RGLPSRSVFLRGCQASLSTAQERLGHPGVPTREGVRVATRSPRPYHEIPSPGDNGWLNLYHLAEEKGTHRVHYRHVQNFQKYGPIYRENLGNVESVYIMDPEDVALLFNSEGPQPERFLIPPWVAYHEYYRRPVGVLLKKAQGWKRDRVALNQEVMAPDAIKNFVPLLEAVSQAFVRMLHGRVQQGVFSGDISDDLFRFAFESMTNIMFGERLGMLEETVDPEAHEFIDAVYQMFHTSVPMLSLPPSLFRLFRTRTWRDHVAAWDVIFTNADKYTQSFYWDLRQKQDLGGSYRGILYSLLGTSKLSFEDIKANVTEMLAGSVDTTSMTLQWHLYEMGAALGMQEMLRAEVLAARRQAQGDMTAMLQSVPLLKASIKETLRLHPISVTLQRYLVNDLVLQDYMIPAKTLVQVANYGMGREPSFFANPEKFDPPRWLDKDKNATHFR.

Residues 1–36 (RGLPSRSVFLRGCQASLSTAQERLGHPGVPTREGVR) constitute a mitochondrion transit peptide.

It belongs to the cytochrome P450 family. In terms of assembly, interacts with FDX1/adrenodoxin. Heme is required as a cofactor.

It is found in the mitochondrion inner membrane. The catalysed reaction is 6 reduced [adrenodoxin] + cholesterol + 3 O2 + 6 H(+) = 4-methylpentanal + pregnenolone + 6 oxidized [adrenodoxin] + 4 H2O. It carries out the reaction 2 reduced [adrenodoxin] + cholesterol + O2 + 2 H(+) = (22R)-hydroxycholesterol + 2 oxidized [adrenodoxin] + H2O. The enzyme catalyses (22R)-hydroxycholesterol + 2 reduced [adrenodoxin] + O2 + 2 H(+) = (20R,22R)-20,22-dihydroxycholesterol + 2 oxidized [adrenodoxin] + H2O. It catalyses the reaction (20R,22R)-20,22-dihydroxycholesterol + 2 reduced [adrenodoxin] + O2 + 2 H(+) = 4-methylpentanal + pregnenolone + 2 oxidized [adrenodoxin] + 2 H2O. It functions in the pathway lipid metabolism; C21-steroid hormone metabolism. Its pathway is steroid metabolism; cholesterol metabolism. A cytochrome P450 monooxygenase that catalyzes the side-chain hydroxylation and cleavage of cholesterol to pregnenolone, the precursor of most steroid hormones. Catalyzes three sequential oxidation reactions of cholesterol, namely the hydroxylation at C22 followed with the hydroxylation at C20 to yield 20R,22R-hydroxycholesterol that is further cleaved between C20 and C22 to yield the C21-steroid pregnenolone and 4-methylpentanal. Mechanistically, uses molecular oxygen inserting one oxygen atom into a substrate and reducing the second into a water molecule. Two electrons are provided by NADPH via a two-protein mitochondrial transfer system comprising flavoprotein FDXR (adrenodoxin/ferredoxin reductase) and nonheme iron-sulfur protein FDX1 or FDX2 (adrenodoxin/ferredoxin). The chain is Cholesterol side-chain cleavage enzyme, mitochondrial (CYP11A1) from Oryctolagus cuniculus (Rabbit).